The sequence spans 370 residues: Cyclic AMP-responsive element-binding protein 3-like protein 4 (370 aa).

The interval 1–55 (MELGCPELLEPPEDIFSTGSFLELGFNGPASKVPVTRGLQKSEPDDFLNLFIDPN) is required for transcriptional activation. The Cytoplasmic portion of the chain corresponds to 1-271 (MELGCPELLE…QTSSRAAQTS (271 aa)). The tract at residues 61-85 (ETSPGRDSGVSEDPGSPAQQASSSP) is disordered. The segment covering 76-85 (SPAQQASSSP) has biased composition (low complexity). The 64-residue stretch at 193–256 (ILKKIRRKIR…IFLMEQVRQL (64 aa)) folds into the bZIP domain. The tract at residues 195-234 (KKIRRKIRNKQSAQDSRRRKKEYLDGLESRVAACSEQNQK) is basic motif. The tract at residues 235 to 256 (LQRKVQELERQNIFLMEQVRQL) is leucine-zipper. The helical; Signal-anchor for type II membrane protein transmembrane segment at 272–292 (TCVLILLFSLALIILPSFSPF) threads the bilayer. The Lumenal segment spans residues 293–370 (QGQSEARPED…IRGMVHTDEM (78 aa)). 2 N-linked (GlcNAc...) asparagine glycosylation sites follow: N318 and N342.

It belongs to the bZIP family. ATF subfamily. As to quaternary structure, binds DNA as a dimer. Forms a heterodimer with CREM isoform Tau. In terms of processing, controlled by regulated intramembrane proteolysis (RIP). Following ER stress a fragment containing the cytoplasmic transcription factor domain is released by proteolysis. The cleavage seems to be performed sequentially by site-1 and site-2 proteases (PS1 and PS2). PS1 cleavage may be suppressed by a determinant in the C-terminal region. Predominantly expressed at high levels in testis with isoform 2 being the predominant isoform. Specifically expressed in postmeiotic spermatids and accumulates in the mid/late stage (at protein level). Ubiquitously expressed at low levels.

Its subcellular location is the endoplasmic reticulum membrane. It localises to the cytoplasmic vesicle. The protein localises to the secretory vesicle. The protein resides in the acrosome inner membrane. It is found in the nucleus. Functionally, transcriptional activator that may play a role in the unfolded protein response of the testis. Proposed to be involved in spermiogenesis. May be involved in regulating the maturation of sperm head nuclei. Alternatively proposed to be a paternally delivered transcription factor that may function in early zygotic gene activation. Increases the binding of CREM isoform Tau with CRE. The CREM isoform Tau-CREB3L4 heterodimer functions through CRE but not through UPRE and may recruit HIRA to CRE to regulate histone exchange. In Mus musculus (Mouse), this protein is Cyclic AMP-responsive element-binding protein 3-like protein 4 (Creb3l4).